The chain runs to 412 residues: Transforming growth factor beta-2 proprotein (412 aa).

The first 20 residues, 1 to 20 (MHCYLLSVFLTLDLAAVALS), serve as a signal peptide directing secretion. Asparagine 72, asparagine 139, and asparagine 240 each carry an N-linked (GlcNAc...) asparagine glycan. Disulfide bonds link cysteine 307–cysteine 316, cysteine 315–cysteine 378, cysteine 344–cysteine 409, and cysteine 348–cysteine 411.

Belongs to the TGF-beta family. As to quaternary structure, interacts with Transforming growth factor beta-2 (TGF-beta-2) chain; interaction is non-covalent and maintains (TGF-beta-2) in a latent state. In terms of assembly, homodimer; disulfide-linked. Interacts with TGF-beta receptors (TGFBR1 and TGFBR2), leading to signal transduction. Post-translationally, the precursor proprotein is cleaved in the Golgi apparatus to form Transforming growth factor beta-2 (TGF-beta-2) and Latency-associated peptide (LAP) chains, which remain non-covalently linked, rendering TGF-beta-2 inactive.

It localises to the secreted. Its subcellular location is the extracellular space. The protein localises to the extracellular matrix. In terms of biological role, precursor of the Latency-associated peptide (LAP) and Transforming growth factor beta-2 (TGF-beta-2) chains, which constitute the regulatory and active subunit of TGF-beta-2, respectively. Functionally, required to maintain the Transforming growth factor beta-2 (TGF-beta-2) chain in a latent state during storage in extracellular matrix. Associates non-covalently with TGF-beta-2 and regulates its activation via interaction with 'milieu molecules', such as LTBP1 and LRRC32/GARP, that control activation of TGF-beta-2. Its function is as follows. Multifunctional protein that regulates various processes such as angiogenesis and heart development. Activation into mature form follows different steps: following cleavage of the proprotein in the Golgi apparatus, Latency-associated peptide (LAP) and Transforming growth factor beta-2 (TGF-beta-2) chains remain non-covalently linked rendering TGF-beta-2 inactive during storage in extracellular matrix. At the same time, LAP chain interacts with 'milieu molecules', such as LTBP1 and LRRC32/GARP, that control activation of TGF-beta-2 and maintain it in a latent state during storage in extracellular milieus. Once activated following release of LAP, TGF-beta-2 acts by binding to TGF-beta receptors (TGFBR1 and TGFBR2), which transduce signal. In Gallus gallus (Chicken), this protein is Transforming growth factor beta-2 proprotein (TGFB2).